The following is a 245-amino-acid chain: tRNA1(Val) (adenine(37)-N6)-methyltransferase (245 aa).

It belongs to the methyltransferase superfamily. tRNA (adenine-N(6)-)-methyltransferase family.

The protein resides in the cytoplasm. It catalyses the reaction adenosine(37) in tRNA1(Val) + S-adenosyl-L-methionine = N(6)-methyladenosine(37) in tRNA1(Val) + S-adenosyl-L-homocysteine + H(+). Its function is as follows. Specifically methylates the adenine in position 37 of tRNA(1)(Val) (anticodon cmo5UAC). The protein is tRNA1(Val) (adenine(37)-N6)-methyltransferase of Salmonella paratyphi C (strain RKS4594).